Reading from the N-terminus, the 158-residue chain is Large ribosomal subunit protein bL19 (158 aa).

Residues 119-129 (SDRSRVMKDAA) show a composition bias toward basic and acidic residues. The segment at 119 to 158 (SDRSRVMKDAARAQQARDAAQGNSSSETQSSTAAVETQGE) is disordered. Residues 130–139 (RAQQARDAAQ) are compositionally biased toward low complexity. Over residues 140-158 (GNSSSETQSSTAAVETQGE) the composition is skewed to polar residues.

Belongs to the bacterial ribosomal protein bL19 family.

Functionally, this protein is located at the 30S-50S ribosomal subunit interface and may play a role in the structure and function of the aminoacyl-tRNA binding site. The protein is Large ribosomal subunit protein bL19 of Deinococcus geothermalis (strain DSM 11300 / CIP 105573 / AG-3a).